Reading from the N-terminus, the 625-residue chain is Folylpolyglutamate synthase (625 aa).

Glycine 141 to serine 144 contributes to the ATP binding site. Mg(2+) is bound by residues serine 165, glutamate 234, and histidine 262. 2 residues coordinate ATP: arginine 384 and aspartate 414.

The protein belongs to the folylpolyglutamate synthase family. The cofactor is a monovalent cation.

It is found in the mitochondrion inner membrane. The protein resides in the mitochondrion matrix. The catalysed reaction is (6S)-5,6,7,8-tetrahydrofolyl-(gamma-L-Glu)(n) + L-glutamate + ATP = (6S)-5,6,7,8-tetrahydrofolyl-(gamma-L-Glu)(n+1) + ADP + phosphate + H(+). The protein operates within cofactor biosynthesis; tetrahydrofolylpolyglutamate biosynthesis. Functionally, catalyzes conversion of folates to polyglutamate derivatives allowing concentration of folate compounds in the cell and the intracellular retention of these cofactors, which are important substrates for most of the folate-dependent enzymes that are involved in one-carbon transfer reactions involved in purine, pyrimidine and amino acid synthesis. Essential for organellar and whole-plant folate homeostasis. The sequence is that of Folylpolyglutamate synthase from Arabidopsis thaliana (Mouse-ear cress).